Here is a 388-residue protein sequence, read N- to C-terminus: uncharacterized protein (388 aa).

This is an uncharacterized protein from Klebsiella pneumoniae.